The chain runs to 910 residues: Protein translocase subunit SecA (910 aa).

Residues Gln-86, 104 to 108 (GEGKT), and Asp-499 contribute to the ATP site. Cys-894, Cys-896, Cys-905, and His-906 together coordinate Zn(2+).

Belongs to the SecA family. As to quaternary structure, monomer and homodimer. Part of the essential Sec protein translocation apparatus which comprises SecA, SecYEG and auxiliary proteins SecDF-YajC and YidC. Zn(2+) is required as a cofactor.

It is found in the cell inner membrane. It localises to the cytoplasm. The catalysed reaction is ATP + H2O + cellular proteinSide 1 = ADP + phosphate + cellular proteinSide 2.. Its function is as follows. Part of the Sec protein translocase complex. Interacts with the SecYEG preprotein conducting channel. Has a central role in coupling the hydrolysis of ATP to the transfer of proteins into and across the cell membrane, serving both as a receptor for the preprotein-SecB complex and as an ATP-driven molecular motor driving the stepwise translocation of polypeptide chains across the membrane. In Rickettsia bellii (strain RML369-C), this protein is Protein translocase subunit SecA.